Here is a 348-residue protein sequence, read N- to C-terminus: Putative [LysW]-L-2-aminoadipate/[LysW]-L-glutamate phosphate reductase (348 aa).

9–12 (SGYV) serves as a coordination point for NADP(+). Residue Cys-149 is part of the active site. Residue Asn-315 participates in NADP(+) binding.

This sequence belongs to the NAGSA dehydrogenase family. Type 1 subfamily. LysY sub-subfamily.

The protein resides in the cytoplasm. The catalysed reaction is [amino-group carrier protein]-C-terminal-N-(1-carboxy-5-oxopentan-1-yl)-L-glutamine + phosphate + NADP(+) = [amino-group carrier protein]-C-terminal-N-(1-carboxy-5-phosphooxy-5-oxopentan-1-yl)-L-glutamine + NADPH + H(+). It catalyses the reaction [amino-group carrier protein]-C-terminal-gamma-(L-glutamyl-5-semialdehyde)-L-glutamate + phosphate + NADP(+) = [amino-group carrier protein]-C-terminal-gamma-(5-phospho-L-glutamyl)-L-glutamate + NADPH + H(+). The protein operates within amino-acid biosynthesis; L-lysine biosynthesis via AAA pathway; L-lysine from L-alpha-aminoadipate (Thermus route): step 3/5. It participates in amino-acid biosynthesis; L-arginine biosynthesis. Its function is as follows. Involved in both the arginine and lysine biosynthetic pathways. This Cenarchaeum symbiosum (strain A) protein is Putative [LysW]-L-2-aminoadipate/[LysW]-L-glutamate phosphate reductase.